The sequence spans 435 residues: Serine--tRNA ligase (435 aa).

Residue 234-236 (TAE) coordinates L-serine. 265-267 (RRE) contributes to the ATP binding site. Residue E288 participates in L-serine binding. 352-355 (EISS) provides a ligand contact to ATP. S388 is an L-serine binding site.

The protein belongs to the class-II aminoacyl-tRNA synthetase family. Type-1 seryl-tRNA synthetase subfamily. As to quaternary structure, homodimer. The tRNA molecule binds across the dimer.

It localises to the cytoplasm. The catalysed reaction is tRNA(Ser) + L-serine + ATP = L-seryl-tRNA(Ser) + AMP + diphosphate + H(+). The enzyme catalyses tRNA(Sec) + L-serine + ATP = L-seryl-tRNA(Sec) + AMP + diphosphate + H(+). It participates in aminoacyl-tRNA biosynthesis; selenocysteinyl-tRNA(Sec) biosynthesis; L-seryl-tRNA(Sec) from L-serine and tRNA(Sec): step 1/1. In terms of biological role, catalyzes the attachment of serine to tRNA(Ser). Is also able to aminoacylate tRNA(Sec) with serine, to form the misacylated tRNA L-seryl-tRNA(Sec), which will be further converted into selenocysteinyl-tRNA(Sec). This is Serine--tRNA ligase from Synechococcus sp. (strain JA-3-3Ab) (Cyanobacteria bacterium Yellowstone A-Prime).